A 384-amino-acid polypeptide reads, in one-letter code: Epoxyqueuosine reductase (384 aa).

The active-site Proton donor is D144. The 33-residue stretch at 186–218 (LPLPVDQPVEEGCGKCVACMTICPTGAIVEPYT) folds into the 4Fe-4S ferredoxin-type domain. Residues C198, C201, C204, C208, C224, C251, C254, and C258 each coordinate [4Fe-4S] cluster.

It belongs to the QueG family. As to quaternary structure, monomer. The cofactor is cob(II)alamin. [4Fe-4S] cluster serves as cofactor.

It is found in the cytoplasm. The enzyme catalyses epoxyqueuosine(34) in tRNA + AH2 = queuosine(34) in tRNA + A + H2O. It participates in tRNA modification; tRNA-queuosine biosynthesis. Functionally, catalyzes the conversion of epoxyqueuosine (oQ) to queuosine (Q), which is a hypermodified base found in the wobble positions of tRNA(Asp), tRNA(Asn), tRNA(His) and tRNA(Tyr). In Salmonella typhimurium (strain LT2 / SGSC1412 / ATCC 700720), this protein is Epoxyqueuosine reductase.